A 197-amino-acid polypeptide reads, in one-letter code: Imidazoleglycerol-phosphate dehydratase (197 aa).

It belongs to the imidazoleglycerol-phosphate dehydratase family.

It is found in the cytoplasm. It carries out the reaction D-erythro-1-(imidazol-4-yl)glycerol 3-phosphate = 3-(imidazol-4-yl)-2-oxopropyl phosphate + H2O. It participates in amino-acid biosynthesis; L-histidine biosynthesis; L-histidine from 5-phospho-alpha-D-ribose 1-diphosphate: step 6/9. This is Imidazoleglycerol-phosphate dehydratase from Methylococcus capsulatus (strain ATCC 33009 / NCIMB 11132 / Bath).